We begin with the raw amino-acid sequence, 440 residues long: Eukaryotic translation initiation factor 3 subunit E (440 aa).

The PCI domain maps to 219 to 392 (VYFNYPKGRD…GQVVMGAKTT (174 aa)).

The protein belongs to the eIF-3 subunit E family. In terms of assembly, component of the eukaryotic translation initiation factor 3 (eIF-3) complex.

The protein resides in the cytoplasm. Functionally, component of the eukaryotic translation initiation factor 3 (eIF-3) complex, which is involved in protein synthesis of a specialized repertoire of mRNAs and, together with other initiation factors, stimulates binding of mRNA and methionyl-tRNAi to the 40S ribosome. The eIF-3 complex specifically targets and initiates translation of a subset of mRNAs involved in cell proliferation. In Brugia malayi (Filarial nematode worm), this protein is Eukaryotic translation initiation factor 3 subunit E.